A 1058-amino-acid polypeptide reads, in one-letter code: Ubiquitin-like modifier-activating enzyme 1 (1058 aa).

Residues 1 to 47 form a disordered region; sequence MSSSPLSKKRRVSGPDPKPGSNCSPAQSVLSEVPSVPTNGMAKNGSE. S2 is subject to N-acetylserine. Position 2 is an N-acetylalanine (S2). Position 4 is a phosphoserine (S4). Residues 5–11 carry the Nuclear localization signal motif; it reads PLSKKRR. A phosphoserine mark is found at S13, S21, S24, and S46. Residues 21-30 are compositionally biased toward polar residues; that stretch reads SNCSPAQSVL. At Y55 the chain carries Phosphotyrosine. Repeat copies occupy residues 63 to 199 and 459 to 611. The segment at 63-611 is 2 approximate repeats; the sequence is GHEAMKRLQT…GTKGNVQVVI (549 aa). Residues A478, D504, R515, K528, and 576 to 577 contribute to the ATP site; that span reads DN. K528 carries the post-translational modification N6-succinyllysine. The active-site Glycyl thioester intermediate is C632. Position 671 is an N6-acetyllysine (K671). At T800 the chain carries Phosphothreonine. A phosphoserine mark is found at S810, S816, S820, and S835. K980 is modified (N6-acetyllysine).

The protein belongs to the ubiquitin-activating E1 family. In terms of assembly, monomer. Interacts with GAN (via BTB domain). In terms of processing, ISGylated. As to expression, detected in erythrocytes (at protein level). Ubiquitous.

The protein resides in the cytoplasm. The protein localises to the mitochondrion. It is found in the nucleus. It carries out the reaction ATP + ubiquitin + [E1 ubiquitin-activating enzyme]-L-cysteine = AMP + diphosphate + S-ubiquitinyl-[E1 ubiquitin-activating enzyme]-L-cysteine.. Its pathway is protein modification; protein ubiquitination. In terms of biological role, catalyzes the first step in ubiquitin conjugation to mark cellular proteins for degradation through the ubiquitin-proteasome system. Activates ubiquitin by first adenylating its C-terminal glycine residue with ATP, and thereafter linking this residue to the side chain of a cysteine residue in E1, yielding a ubiquitin-E1 thioester and free AMP. Essential for the formation of radiation-induced foci, timely DNA repair and for response to replication stress. Promotes the recruitment of TP53BP1 and BRCA1 at DNA damage sites. In Homo sapiens (Human), this protein is Ubiquitin-like modifier-activating enzyme 1 (UBA1).